A 274-amino-acid polypeptide reads, in one-letter code: Large ribosomal subunit protein uL2 (274 aa).

2 disordered regions span residues 28–54 (APYAPLLEKNSKSGGRNNNGRITTRHI) and 223–265 (VAMN…KRTD). Low complexity predominate over residues 39–48 (KSGGRNNNGR).

The protein belongs to the universal ribosomal protein uL2 family. As to quaternary structure, part of the 50S ribosomal subunit. Forms a bridge to the 30S subunit in the 70S ribosome.

One of the primary rRNA binding proteins. Required for association of the 30S and 50S subunits to form the 70S ribosome, for tRNA binding and peptide bond formation. It has been suggested to have peptidyltransferase activity; this is somewhat controversial. Makes several contacts with the 16S rRNA in the 70S ribosome. This is Large ribosomal subunit protein uL2 from Alteromonas mediterranea (strain DSM 17117 / CIP 110805 / LMG 28347 / Deep ecotype).